Consider the following 489-residue polypeptide: Argininosuccinate lyase (489 aa).

The interval Q462 to S489 is disordered.

This sequence belongs to the lyase 1 family. Argininosuccinate lyase subfamily.

It is found in the cytoplasm. It catalyses the reaction 2-(N(omega)-L-arginino)succinate = fumarate + L-arginine. Its pathway is amino-acid biosynthesis; L-arginine biosynthesis; L-arginine from L-ornithine and carbamoyl phosphate: step 3/3. The protein is Argininosuccinate lyase of Synechococcus sp. (strain JA-3-3Ab) (Cyanobacteria bacterium Yellowstone A-Prime).